Reading from the N-terminus, the 235-residue chain is MAKRSKAYEAAVAKIEEGKFYAPADAVTLAQDTNPSKFDATIEVAFRLGVDPRKADQMVRGTVILPHGTGKTARVLVFATGDRAEAAIAAGADFVGSDDLIEKIAGGWTDFDAAVATPDLMGKVGRLGKVLGPRNLMPNPKTGTVTVDVAKAVNEIKGGKIDFRVDKHSNLHFIIGKVSFGAQQLVENYAAALDEVLRLKPSTSKGRYLQKATVTTTFGPGISVDPNVTKVLADA.

The protein belongs to the universal ribosomal protein uL1 family. In terms of assembly, part of the 50S ribosomal subunit.

Functionally, binds directly to 23S rRNA. The L1 stalk is quite mobile in the ribosome, and is involved in E site tRNA release. Its function is as follows. Protein L1 is also a translational repressor protein, it controls the translation of the L11 operon by binding to its mRNA. The sequence is that of Large ribosomal subunit protein uL1 from Renibacterium salmoninarum (strain ATCC 33209 / DSM 20767 / JCM 11484 / NBRC 15589 / NCIMB 2235).